Reading from the N-terminus, the 211-residue chain is Thymidylate kinase (211 aa).

7-14 (GIDASGKS) lines the ATP pocket.

Belongs to the thymidylate kinase family.

The catalysed reaction is dTMP + ATP = dTDP + ADP. Functionally, phosphorylation of dTMP to form dTDP in both de novo and salvage pathways of dTTP synthesis. The protein is Thymidylate kinase of Mesomycoplasma hyopneumoniae (strain 232) (Mycoplasma hyopneumoniae).